A 343-amino-acid polypeptide reads, in one-letter code: Galactoside alpha-(1,2)-fucosyltransferase 2 (343 aa).

Residues 1-14 (MLVVQMPFSFPMAH) are Cytoplasmic-facing. A helical; Signal-anchor for type II membrane protein transmembrane segment spans residues 15-28 (FILFVFTVSTIFHV). The Lumenal portion of the chain corresponds to 29-343 (QQRLAKIQAM…AADLSPLLKH (315 aa)). N-linked (GlcNAc...) asparagine glycosylation is found at asparagine 188, asparagine 282, and asparagine 308.

This sequence belongs to the glycosyltransferase 11 family.

Its subcellular location is the golgi apparatus. The protein localises to the golgi stack membrane. The catalysed reaction is a beta-D-galactosyl-(1-&gt;3)-N-acetyl-beta-D-glucosaminyl derivative + GDP-beta-L-fucose = an alpha-L-Fuc-(1-&gt;2)-beta-D-Gal-(1-&gt;3)-beta-D-GlcNAc derivative + GDP + H(+). The enzyme catalyses a beta-D-galactosyl-(1-&gt;4)-N-acetyl-beta-D-glucosaminyl derivative + GDP-beta-L-fucose = an alpha-L-Fuc-(1-&gt;2)-beta-D-Gal-(1-&gt;4)-beta-D-GlcNAc derivative + GDP + H(+). It catalyses the reaction a neolactoside nLc4Cer + GDP-beta-L-fucose = a neolactoside IV(2)-alpha-Fuc-nLc4Cer + GDP + H(+). It carries out the reaction a neolactoside nLc4Cer(d18:1(4E)) + GDP-beta-L-fucose = a neolactoside IV(2)-alpha-Fuc-nLc4Cer(d18:1(4E)) + GDP + H(+). The catalysed reaction is a ganglioside GM1 + GDP-beta-L-fucose = a ganglioside Fuc-GM1 + GDP + H(+). The enzyme catalyses a ganglioside GA1 + GDP-beta-L-fucose = a ganglioside Fuc-GA1 + GDP + H(+). It catalyses the reaction Lc4Cer + GDP-beta-L-fucose = alpha-L-fucosyl-(1-&gt;2)-beta-D-galactosyl-(1-&gt;3)-N-acetyl-beta-D-glucosaminyl-(1-&gt;3)-beta-D-galactosyl-(1-&gt;4)-beta-D-glucosyl-(1&lt;-&gt;1')-ceramide + GDP + H(+). It carries out the reaction a beta-D-Gal-(1-&gt;3)-beta-D-GlcNAc-(1-&gt;3)-beta-D-Gal-(1-&gt;4)-beta-D-Glc-(1&lt;-&gt;1')-Cer(d18:1(4E)) + GDP-beta-L-fucose = alpha-L-fucosyl-(1-&gt;2)- beta-D-galactosyl-(1-&gt;3)-N-acetyl-beta-D-glucosaminyl-(1-&gt;3)-beta-D-galactosyl-(1-&gt;4)-beta-D-glucosyl-(1&lt;-&gt;1')-N-acylsphing-4-enine + GDP + H(+). The catalysed reaction is a ganglioside GD1b + GDP-beta-L-fucose = a ganglioside Fuc-GD1b + GDP + H(+). The enzyme catalyses a ganglioside GM1 (d18:1(4E)) + GDP-beta-L-fucose = a ganglioside Fuc-GM1 (d18:1(4E)) + GDP + H(+). It catalyses the reaction a globoside GalGb4Cer (d18:1(4E)) + GDP-beta-L-fucose = a globoside Globo-H (d18:1(4E)) + GDP + H(+). It carries out the reaction a lactoside III(4)-a-Fuc-Lc4Cer + GDP-beta-L-fucose = a lactoside IV(2),III(4)-a-[Fuc]2-Lc4Cer + GDP + H(+). The catalysed reaction is beta-D-galactosyl-(1-&gt;3)-N-acetyl-D-galactosamine + GDP-beta-L-fucose = alpha-L-fucosyl-(1-&gt;2)-beta-D-galactosyl-(1-&gt;3)-N-acetyl-D-galactosamine + GDP + H(+). The protein operates within protein modification; protein glycosylation. In terms of biological role, catalyzes the transfer of L-fucose, from a guanosine diphosphate-beta-L-fucose, to the terminal galactose on both O- and N-linked glycans chains of cell surface glycoproteins and glycolipids and the resulting epitope regulates several processes such as cell-cell interaction including host-microbe interaction, cell surface expression and cell proliferation. Preferentially fucosylates gangliosides GA1 and GM1 in the antrum, cecum and colon and in the female reproductive organs. Fucosylated host glycoproteins or glycolipids mediate interaction with intestinal microbiota influencing its composition. Creates a soluble precursor oligosaccharide FuC-alpha ((1,2)Galbeta-) called the H antigen which is an essential substrate for the final step in the soluble ABO blood group antigen synthesis pathway. This is Galactoside alpha-(1,2)-fucosyltransferase 2 from Gorilla gorilla gorilla (Western lowland gorilla).